The following is a 477-amino-acid chain: ATP synthase subunit beta (477 aa).

163 to 170 is an ATP binding site; the sequence is GGAGVGKT.

This sequence belongs to the ATPase alpha/beta chains family. In terms of assembly, F-type ATPases have 2 components, CF(1) - the catalytic core - and CF(0) - the membrane proton channel. CF(1) has five subunits: alpha(3), beta(3), gamma(1), delta(1), epsilon(1). CF(0) has four main subunits: a(1), b(1), b'(1) and c(9-12).

The protein localises to the cellular thylakoid membrane. It carries out the reaction ATP + H2O + 4 H(+)(in) = ADP + phosphate + 5 H(+)(out). In terms of biological role, produces ATP from ADP in the presence of a proton gradient across the membrane. The catalytic sites are hosted primarily by the beta subunits. The polypeptide is ATP synthase subunit beta (Synechococcus sp. (strain JA-2-3B'a(2-13)) (Cyanobacteria bacterium Yellowstone B-Prime)).